Consider the following 295-residue polypeptide: Ethanolamine ammonia-lyase small subunit (295 aa).

Adenosylcob(III)alamin-binding residues include Val-207, Glu-228, and Cys-258.

It belongs to the EutC family. As to quaternary structure, the basic unit is a heterodimer which dimerizes to form tetramers. The heterotetramers trimerize; 6 large subunits form a core ring with 6 small subunits projecting outwards. The cofactor is adenosylcob(III)alamin.

Its subcellular location is the bacterial microcompartment. The enzyme catalyses ethanolamine = acetaldehyde + NH4(+). It functions in the pathway amine and polyamine degradation; ethanolamine degradation. Catalyzes the deamination of various vicinal amino-alcohols to oxo compounds. Allows this organism to utilize ethanolamine as the sole source of nitrogen and carbon in the presence of external vitamin B12. The sequence is that of Ethanolamine ammonia-lyase small subunit from Escherichia coli O81 (strain ED1a).